The chain runs to 77 residues: UPF0401 protein ECP_3010 (77 aa).

It belongs to the UPF0401 family.

The chain is UPF0401 protein ECP_3010 from Escherichia coli O6:K15:H31 (strain 536 / UPEC).